A 358-amino-acid chain; its full sequence is Ribosomal RNA large subunit methyltransferase M (358 aa).

S-adenosyl-L-methionine-binding positions include S191, 224–227 (APGG), D243, D263, and D279. The active-site Proton acceptor is the K308.

This sequence belongs to the class I-like SAM-binding methyltransferase superfamily. RNA methyltransferase RlmE family. RlmM subfamily. In terms of assembly, monomer.

It localises to the cytoplasm. It carries out the reaction cytidine(2498) in 23S rRNA + S-adenosyl-L-methionine = 2'-O-methylcytidine(2498) in 23S rRNA + S-adenosyl-L-homocysteine + H(+). Functionally, catalyzes the 2'-O-methylation at nucleotide C2498 in 23S rRNA. This Marinobacter nauticus (strain ATCC 700491 / DSM 11845 / VT8) (Marinobacter aquaeolei) protein is Ribosomal RNA large subunit methyltransferase M.